A 428-amino-acid chain; its full sequence is Peptidase B (428 aa).

Residues Lys195 and Asp200 each contribute to the Mn(2+) site. The active site involves Lys207. Positions 218, 277, and 279 each coordinate Mn(2+). Arg281 is a catalytic residue.

The protein belongs to the peptidase M17 family. Homohexamer. It depends on Mn(2+) as a cofactor.

The protein resides in the cytoplasm. It catalyses the reaction Release of an N-terminal amino acid, Xaa, from a peptide or arylamide. Xaa is preferably Glu or Asp but may be other amino acids, including Leu, Met, His, Cys and Gln.. In terms of biological role, probably plays an important role in intracellular peptide degradation. The chain is Peptidase B from Klebsiella pneumoniae subsp. pneumoniae (strain ATCC 700721 / MGH 78578).